Here is a 389-residue protein sequence, read N- to C-terminus: Ribonucleoside-diphosphate reductase subunit M2 (389 aa).

S20 carries the post-translational modification Phosphoserine. T33 is modified (phosphothreonine). Positions 49–51 match the Cy motif; the sequence is RRI. Residues D138, E169, and H172 each coordinate Fe cation. The active site involves Y176. Fe cation is bound by residues E232, E266, and H269.

The protein belongs to the ribonucleoside diphosphate reductase small chain family. Heterodimer of a large and a small subunit. Interacts (via Cy motif and when phosphorylated at Thr-33) with CCNF; the interaction occurs exclusively in G2 and early M. Fe cation serves as cofactor. In terms of processing, phosphorylation on Ser-20 relieves the inhibitory effect on Wnt signaling. Phosphorylated on Thr-33 by CDK1 and CDK2; predominantly in G2 and M phase. Ubiquitinated by the SCF(CCNF) E3 ubiquitin-protein ligase complex; leading to its degradation by the proteasome.

The protein localises to the cytoplasm. Its subcellular location is the nucleus. The catalysed reaction is a 2'-deoxyribonucleoside 5'-diphosphate + [thioredoxin]-disulfide + H2O = a ribonucleoside 5'-diphosphate + [thioredoxin]-dithiol. Provides the precursors necessary for DNA synthesis. Catalyzes the biosynthesis of deoxyribonucleotides from the corresponding ribonucleotides. Inhibits Wnt signaling. In Homo sapiens (Human), this protein is Ribonucleoside-diphosphate reductase subunit M2 (RRM2).